A 610-amino-acid chain; its full sequence is Dihydroxy-acid dehydratase (610 aa).

Residue aspartate 81 participates in Mg(2+) binding. Residue cysteine 122 participates in [2Fe-2S] cluster binding. The Mg(2+) site is built by aspartate 123 and lysine 124. Position 124 is an N6-carboxylysine (lysine 124). A [2Fe-2S] cluster-binding site is contributed by cysteine 193. Glutamate 489 serves as a coordination point for Mg(2+). The active-site Proton acceptor is the serine 515.

It belongs to the IlvD/Edd family. As to quaternary structure, homodimer. [2Fe-2S] cluster serves as cofactor. The cofactor is Mg(2+).

It catalyses the reaction (2R)-2,3-dihydroxy-3-methylbutanoate = 3-methyl-2-oxobutanoate + H2O. The enzyme catalyses (2R,3R)-2,3-dihydroxy-3-methylpentanoate = (S)-3-methyl-2-oxopentanoate + H2O. It participates in amino-acid biosynthesis; L-isoleucine biosynthesis; L-isoleucine from 2-oxobutanoate: step 3/4. Its pathway is amino-acid biosynthesis; L-valine biosynthesis; L-valine from pyruvate: step 3/4. Functionally, functions in the biosynthesis of branched-chain amino acids. Catalyzes the dehydration of (2R,3R)-2,3-dihydroxy-3-methylpentanoate (2,3-dihydroxy-3-methylvalerate) into 2-oxo-3-methylpentanoate (2-oxo-3-methylvalerate) and of (2R)-2,3-dihydroxy-3-methylbutanoate (2,3-dihydroxyisovalerate) into 2-oxo-3-methylbutanoate (2-oxoisovalerate), the penultimate precursor to L-isoleucine and L-valine, respectively. The sequence is that of Dihydroxy-acid dehydratase from Xylella fastidiosa (strain 9a5c).